The sequence spans 59 residues: Large ribosomal subunit protein bL32 (59 aa).

The segment at 1 to 25 (MAVQQNKKSPSKRGMHRSHDFLNAA) is disordered.

This sequence belongs to the bacterial ribosomal protein bL32 family.

This chain is Large ribosomal subunit protein bL32, found in Paraburkholderia phymatum (strain DSM 17167 / CIP 108236 / LMG 21445 / STM815) (Burkholderia phymatum).